A 92-amino-acid polypeptide reads, in one-letter code: Co-chaperonin GroES (92 aa).

The protein belongs to the GroES chaperonin family. Heptamer of 7 subunits arranged in a ring. Interacts with the chaperonin GroEL.

It is found in the cytoplasm. Functionally, together with the chaperonin GroEL, plays an essential role in assisting protein folding. The GroEL-GroES system forms a nano-cage that allows encapsulation of the non-native substrate proteins and provides a physical environment optimized to promote and accelerate protein folding. GroES binds to the apical surface of the GroEL ring, thereby capping the opening of the GroEL channel. In Thermotoga maritima (strain ATCC 43589 / DSM 3109 / JCM 10099 / NBRC 100826 / MSB8), this protein is Co-chaperonin GroES.